Here is a 354-residue protein sequence, read N- to C-terminus: MDRRDAMALSGSGSYYIQRGIPGSGPPPPQTQPTFHGSQGFHHFTNSISPFGSNPNPNPNPGGVSTGFVSPPLPVDSSPADSSAAAAGALVAPPSGDTSVKRKRGRPRKYGQDGGSVSLALSPSISNVSPNSNKRGRGRPPGSGKKQRLSSIGEMMPSSTGMSFTPHVIVVSIGEDIASKVISFSHQGPRAICVLSASGAVSTATLLQPAPSHGTIIYEGLFELISLSTSYLNTTDNDYPNRTGSLAVSLASPDGRVIGGGIGGPLIAASQVQVIVGSFIWAIPKGKIKKREETSEDVQDTDALENNNDNTAATSPPVPQQSQNIVQTPVGIWSTGSRSMDMHHPHMDIDLMRG.

Disordered stretches follow at residues 1–158 (MDRR…MMPS) and 290–354 (KREE…LMRG). Low complexity-rich tracts occupy residues 46 to 55 (NSISPFGSNP) and 75 to 96 (VDSS…PPSG). Positions 101–109 (KRKRGRPRK) match the Bipartite nuclear localization signal motif. The segment at residues 101–113 (KRKRGRPRKYGQD) is a DNA-binding region (a.T hook 1). Residues 122–133 (SPSISNVSPNSN) show a composition bias toward low complexity. The a.T hook 2 DNA-binding region spans 134 to 146 (KRGRGRPPGSGKK). The PPC domain occupies 159–302 (STGMSFTPHV…ETSEDVQDTD (144 aa)). Positions 294 to 303 (TSEDVQDTDA) are enriched in acidic residues. Polar residues predominate over residues 304–327 (LENNNDNTAATSPPVPQQSQNIVQ). Basic and acidic residues predominate over residues 340-354 (MDMHHPHMDIDLMRG).

It localises to the nucleus. Transcription factor that specifically binds AT-rich DNA sequences related to the nuclear matrix attachment regions (MARs). The polypeptide is AT-hook motif nuclear-localized protein 11 (Arabidopsis thaliana (Mouse-ear cress)).